Reading from the N-terminus, the 685-residue chain is Sodium-dependent phosphate transporter 1-A (685 aa).

6 consecutive transmembrane segments (helical) span residues 21–41, 66–86, 106–126, 162–182, 207–227, and 234–254; these read IMAP…VLAF, ACIL…AKVS, LMAG…AASF, IVLS…LLFL, ACTI…LLGF, and GIIL…WFVV. Disordered stretches follow at residues 438–458 and 483–513; these read RNRD…HGAD and EAEE…HDQD. The span at 483-496 shows a compositional bias: acidic residues; sequence EAEEQEEGSVEDVE. Residues 497–513 are compositionally biased toward basic and acidic residues; sequence TDRKSSSSSLEERHDQD. The next 4 membrane-spanning stretches (helical) occupy residues 517 to 537, 565 to 585, 606 to 626, and 656 to 676; these read VSLL…FAHG, ATPI…LWVW, FSIE…GLPI, and IFLA…GIMA.

It belongs to the inorganic phosphate transporter (PiT) (TC 2.A.20) family.

The protein resides in the membrane. Functionally, sodium-phosphate symporter which plays a fundamental housekeeping role in phosphate transport. This Xenopus laevis (African clawed frog) protein is Sodium-dependent phosphate transporter 1-A (slc20a1-a).